Consider the following 189-residue polypeptide: Dual specificity phosphatase 29 (189 aa).

The region spanning 33 to 182 (HVNEVWPGVY…LRELDTHLQE (150 aa)) is the Tyrosine-protein phosphatase domain. Substrate is bound at residue 126–133 (HCVMGRSR). The Phosphocysteine intermediate role is filled by cysteine 127.

This sequence belongs to the protein-tyrosine phosphatase family. Non-receptor class dual specificity subfamily.

It is found in the cytoplasm. The protein localises to the nucleus. It catalyses the reaction O-phospho-L-tyrosyl-[protein] + H2O = L-tyrosyl-[protein] + phosphate. The enzyme catalyses O-phospho-L-seryl-[protein] + H2O = L-seryl-[protein] + phosphate. The catalysed reaction is O-phospho-L-threonyl-[protein] + H2O = L-threonyl-[protein] + phosphate. Functionally, dual specificity phosphatase able to dephosphorylate phosphotyrosine, phosphoserine and phosphothreonine residues within the same substrate, with a preference for phosphotyrosine as a substrate. Involved in the modulation of AMPK and MAPK1/2 signaling pathways. The polypeptide is Dual specificity phosphatase 29 (dusp29) (Danio rerio (Zebrafish)).